The chain runs to 703 residues: Elongation factor G (703 aa).

In terms of domain architecture, tr-type G spans 8–290 (ARYRNIGICA…AVIEYLPAPT (283 aa)). Residues 17-24 (AHVDAGKT), 88-92 (DTPGH), and 142-145 (NKMD) each bind GTP.

It belongs to the TRAFAC class translation factor GTPase superfamily. Classic translation factor GTPase family. EF-G/EF-2 subfamily.

Its subcellular location is the cytoplasm. Catalyzes the GTP-dependent ribosomal translocation step during translation elongation. During this step, the ribosome changes from the pre-translocational (PRE) to the post-translocational (POST) state as the newly formed A-site-bound peptidyl-tRNA and P-site-bound deacylated tRNA move to the P and E sites, respectively. Catalyzes the coordinated movement of the two tRNA molecules, the mRNA and conformational changes in the ribosome. The protein is Elongation factor G of Teredinibacter turnerae (strain ATCC 39867 / T7901).